Here is a 129-residue protein sequence, read N- to C-terminus: Large ribosomal subunit protein bL12 (129 aa).

Residues 94–113 (TEGLPKTVKEKTSKSDAEDT) are disordered.

It belongs to the bacterial ribosomal protein bL12 family. Homodimer. Part of the ribosomal stalk of the 50S ribosomal subunit. Forms a multimeric L10(L12)X complex, where L10 forms an elongated spine to which 2 to 4 L12 dimers bind in a sequential fashion. Binds GTP-bound translation factors.

In terms of biological role, forms part of the ribosomal stalk which helps the ribosome interact with GTP-bound translation factors. Is thus essential for accurate translation. This is Large ribosomal subunit protein bL12 from Chlamydia pneumoniae (Chlamydophila pneumoniae).